A 75-amino-acid chain; its full sequence is Putative defensin-like protein 271 (75 aa).

The first 23 residues, 1–23, serve as a signal peptide directing secretion; it reads MTSMKLHIVALCIIVSFLVNVQS. 4 disulfides stabilise this stretch: Cys33–Cys72, Cys39–Cys61, Cys45–Cys70, and Cys49–Cys71.

It belongs to the DEFL family.

The protein resides in the secreted. This chain is Putative defensin-like protein 271, found in Arabidopsis thaliana (Mouse-ear cress).